A 779-amino-acid chain; its full sequence is MSKVRVYEYAKEHQVSSKKVIEALKDLGIEVANHMSTINENALRQLDNAVDGTNKKAEAPKKETTSNENGNSKGPNKPNMTNSNEKSNKPNKPAGQANKPATANKSQGAKPATNKPANTSNQTQSSGTQQQAGGQKRNNSNRPGGGNSNRPGGNNRPNRGGNFNNKGRNTKKKGKLNHSTVPPTPPKPKELPEKIVFSESLTVAELAKKLYREPSELIKKLFMLGVVATINQSLDKDAIELICDDYGVQVEEEIKVDVTDLDVYFENELNEAVDESKLVERPPVVTIMGHVDHGKTTLLDSLRNTKVTLGEAGGITQHIGAYQLEIHDKKITFLDTPGHAAFTAMRARGAQITDITILVVAADDGVMPQTIEAINHAKAAGMPIIVAVNKIDKPQANPDRVMQELTEYELVPEAWGGDTIFAPISAKFGEGLENLLDMILLVSEVEELKANPDRRAIGSVIEAELDKGRGPVATLLVQDGTLNIGDPIVVGNTFGRVRAMVNDLGRRVKKVGPSTPVEITGLNDVPQAGDRFVVFEDEKTARNIGETRASRALVAQRSATNRVSLDNLFEHMKAGEMKEVNVIIKADVQGSVEALAASLRKIDVEGVNVKIIHTAVGAINESDITLAAASNAIVIGFNVRPTAQAREAAENESVDIRLHRVIYKAIDEIEAAMKGMLDPEFQEKIIGQAQVRQTINVSKVGTIAGCYVTDGKITRDSGVRIIRDGIVVFEGEIATLKRFKDDAKEVAKGYECGITVQNFNDIKEDDVIEAYVMEEIERK.

The tract at residues 44–193 (RQLDNAVDGT…TPPKPKELPE (150 aa)) is disordered. A compositionally biased stretch (basic and acidic residues) spans 53-65 (TNKKAEAPKKETT). Over residues 66 to 81 (SNENGNSKGPNKPNMT) the composition is skewed to polar residues. 2 stretches are compositionally biased toward low complexity: residues 82 to 93 (NSNEKSNKPNKP) and 117 to 167 (ANTS…NNKG). The 170-residue stretch at 280–449 (ERPPVVTIMG…LLVSEVEELK (170 aa)) folds into the tr-type G domain. Positions 289–296 (GHVDHGKT) are G1. 289–296 (GHVDHGKT) contacts GTP. The tract at residues 314–318 (GITQH) is G2. Residues 335 to 338 (DTPG) form a G3 region. Residues 335–339 (DTPGH) and 389–392 (NKID) each bind GTP. Residues 389 to 392 (NKID) form a G4 region. The interval 425 to 427 (SAK) is G5.

Belongs to the TRAFAC class translation factor GTPase superfamily. Classic translation factor GTPase family. IF-2 subfamily.

It is found in the cytoplasm. One of the essential components for the initiation of protein synthesis. Protects formylmethionyl-tRNA from spontaneous hydrolysis and promotes its binding to the 30S ribosomal subunits. Also involved in the hydrolysis of GTP during the formation of the 70S ribosomal complex. In Listeria monocytogenes serovar 1/2a (strain ATCC BAA-679 / EGD-e), this protein is Translation initiation factor IF-2.